The sequence spans 340 residues: MTNKNAYAQSGVDVEAGYEVVERIKKHVARTERAGVMGALGGFGGMFDLSKTGVKEPVLISGTDGVGTKLMLAIKYDKHDTIGQDCVAMCVNDIIAAGAEPLYFLDYVATGKNEPAKLEQVVAGVAEGCVQAGAALIGGETAEMPGMYGEDDYDLAGFAVGVAEKSQIIDGSKVVEGDVLLGLASSGIHSNGYSLVRRVFADYTGEEVLPELEGKKLKEVLLEPTRIYVKAVLPLIKEELVNGIAHITGGGFIENVPRMFADDLAAEIDESKVPVLPIFKALEKYGQIKHEEMFEIFNMGVGLMLAVSPENVERVKELLDEAVYEIGRIVKKENESVIIK.

It belongs to the AIR synthase family.

It is found in the cytoplasm. It catalyses the reaction 2-formamido-N(1)-(5-O-phospho-beta-D-ribosyl)acetamidine + ATP = 5-amino-1-(5-phospho-beta-D-ribosyl)imidazole + ADP + phosphate + H(+). The protein operates within purine metabolism; IMP biosynthesis via de novo pathway; 5-amino-1-(5-phospho-D-ribosyl)imidazole from N(2)-formyl-N(1)-(5-phospho-D-ribosyl)glycinamide: step 2/2. The sequence is that of Phosphoribosylformylglycinamidine cyclo-ligase from Streptococcus pneumoniae (strain 70585).